The primary structure comprises 1026 residues: Multidrug resistance protein MdtC (1026 aa).

Helical transmembrane passes span 15-35, 333-353, 360-380, 387-407, 431-451, 463-483, 528-548, 853-873, 897-917, 953-973, and 984-1004; these read ILIA…LPVA, EVEE…FLFL, LIPA…MYLC, LSLM…IVVL, VGFT…PLLL, FAVT…TLTP, LVGV…IAIP, LILI…LYES, LFNA…IGIV, PIMM…LSGG, and ITIV…TPVV.

It belongs to the resistance-nodulation-cell division (RND) (TC 2.A.6) family. MdtC subfamily. Part of a tripartite efflux system composed of MdtA, MdtB and MdtC. MdtC forms a heteromultimer with MdtB.

The protein localises to the cell inner membrane. The sequence is that of Multidrug resistance protein MdtC from Salmonella choleraesuis (strain SC-B67).